A 563-amino-acid chain; its full sequence is Putative solute carrier family 26 member 10P (563 aa).

5 consecutive transmembrane segments (helical) span residues 45–65 (ALLASVPPVFGLYTSFFPVLI), 75–91 (LSTGTFAILSLMTGSAV), 116–136 (VGVAAAVAFGSGALMLGMFVL), 152–172 (ALTSGAALHVLLSQLPSLLGL), and 352–372 (LAGLFSCTVVLSVLLWLGPFF). An STAS domain is found at 406–541 (RVDFLLQVPG…VSVQDAAAYA (136 aa)).

The protein belongs to the SLC26A/SulP transporter (TC 2.A.53) family.

The protein resides in the membrane. Its function is as follows. Chloride/bicarbonate exchanger. The polypeptide is Putative solute carrier family 26 member 10P (SLC26A10P) (Homo sapiens (Human)).